The sequence spans 328 residues: Malate dehydrogenase (328 aa).

11–17 (GAAGQIG) lines the NAD(+) pocket. Substrate-binding residues include arginine 92 and arginine 98. NAD(+) contacts are provided by residues asparagine 105, glutamine 112, and 129–131 (VGN). Residues asparagine 131 and arginine 162 each contribute to the substrate site. The active-site Proton acceptor is histidine 187.

This sequence belongs to the LDH/MDH superfamily. MDH type 2 family.

The enzyme catalyses (S)-malate + NAD(+) = oxaloacetate + NADH + H(+). Functionally, catalyzes the reversible oxidation of malate to oxaloacetate. The polypeptide is Malate dehydrogenase (Coxiella burnetii (strain RSA 493 / Nine Mile phase I)).